The following is a 275-amino-acid chain: Trypsin-3 (275 aa).

An N-terminal signal peptide occupies residues 1-22 (MISNKIAILLAVLVVAVACAQA). Positions 23–48 (RVALKHRSVQALPRFLPRPKYDVGHR) are cleaved as a propeptide — activation peptide. The region spanning 49–274 (IVGGFEIDVS…VRDWVRENSG (226 aa)) is the Peptidase S1 domain. Cysteine 74 and cysteine 90 are joined by a disulfide. Catalysis depends on charge relay system residues histidine 89 and aspartate 134. Disulfide bonds link cysteine 199–cysteine 215 and cysteine 226–cysteine 250. The active-site Charge relay system is serine 230.

It belongs to the peptidase S1 family. Expressed in the midgut. Expression levels drop a few hours after blood feeding and pick up again 28 hours later.

The protein resides in the secreted. It carries out the reaction Preferential cleavage: Arg-|-Xaa, Lys-|-Xaa.. In terms of biological role, constitutive trypsin that is expressed 2 days after emergence, coinciding with host seeking behavior of the female. In Anopheles gambiae (African malaria mosquito), this protein is Trypsin-3 (TRYP3).